The following is a 205-amino-acid chain: dTTP/UTP pyrophosphatase (205 aa).

Residue Asp66 is the Proton acceptor of the active site.

The protein belongs to the Maf family. YhdE subfamily. The cofactor is a divalent metal cation.

The protein resides in the cytoplasm. It carries out the reaction dTTP + H2O = dTMP + diphosphate + H(+). The catalysed reaction is UTP + H2O = UMP + diphosphate + H(+). Its function is as follows. Nucleoside triphosphate pyrophosphatase that hydrolyzes dTTP and UTP. May have a dual role in cell division arrest and in preventing the incorporation of modified nucleotides into cellular nucleic acids. This is dTTP/UTP pyrophosphatase from Anaeromyxobacter sp. (strain Fw109-5).